A 499-amino-acid polypeptide reads, in one-letter code: Cysteine--tRNA ligase (499 aa).

Position 31 (Cys31) interacts with Zn(2+). A 'HIGH' region motif is present at residues 33-43 (VTVYDLCHLGH). Zn(2+) is bound by residues Cys215, His240, and Glu244. Residues 272–276 (KMSKS) carry the 'KMSKS' region motif. Lys275 is an ATP binding site.

It belongs to the class-I aminoacyl-tRNA synthetase family. Monomer. The cofactor is Zn(2+).

It localises to the cytoplasm. The enzyme catalyses tRNA(Cys) + L-cysteine + ATP = L-cysteinyl-tRNA(Cys) + AMP + diphosphate. The protein is Cysteine--tRNA ligase of Synechococcus sp. (strain WH7803).